A 479-amino-acid polypeptide reads, in one-letter code: Cysteine protease effector 1 (479 aa).

This is Cysteine protease effector 1 from Escherichia coli O1:K1:H7 (strain ATCC 11775 / DSM 30083 / JCM 1649 / NBRC 102203 / NCTC 9001 / U5/41).